The sequence spans 377 residues: 6-oxocyclohex-1-ene-1-carbonyl-CoA hydrolase (377 aa).

The protein belongs to the enoyl-CoA hydratase/isomerase family. In terms of assembly, homotetramer.

The catalysed reaction is 6-oxocyclohex-1-ene-1-carbonyl-CoA + 2 H2O = 3-hydroxy-6-carboxyhexanoyl-CoA + H(+). Its pathway is aromatic compound metabolism; benzoyl-CoA degradation. Functionally, involved in the central benzoyl-CoA catabolism. Catalyzes the addition of one molecule of water to the double bond and the hydrolytic cleavage of C-C bond in the alicyclic ring, 6-oxocyclohex-1-ene-1-carbonyl-CoA (6-OCH-CoA) to yield 3-hydroxypimelyl-CoA. The sequence is that of 6-oxocyclohex-1-ene-1-carbonyl-CoA hydrolase (oah) from Thauera aromatica.